The sequence spans 381 residues: uncharacterized protein (381 aa).

An N-terminal signal peptide occupies residues 1–16 (MQTLLFYFFFINLIFA). Over 17-303 (HDLNVKTYKP…KILENSPCPN (287 aa)) the chain is Lumenal. A disulfide bridge links Cys118 with Cys149. Residues Asn133, Asn192, Asn225, Asn243, Asn246, and Asn287 are each glycosylated (N-linked (GlcNAc...) asparagine). Residues 304 to 324 (QPSIQPFGILMMLVSTIYGNF) traverse the membrane as a helical segment. The Cytoplasmic portion of the chain corresponds to 325–359 (KNLYNCIKRNTIGYIYNSIYDFWITEGMLFPMRNM). Residues 360–380 (DIFKITAISIGLSIPVFLWLL) form a helical membrane-spanning segment. Residue Lys381 is a topological domain, lumenal.

It belongs to the calreticulin family.

The protein resides in the endoplasmic reticulum membrane. This is an uncharacterized protein from Schizosaccharomyces pombe (strain 972 / ATCC 24843) (Fission yeast).